Reading from the N-terminus, the 822-residue chain is Cation/H(+) antiporter 3 (822 aa).

The next 12 helical transmembrane spans lie at phenylalanine 55–phenylalanine 75, glutamate 116–valine 136, alanine 150–phenylalanine 170, tyrosine 190–phenylalanine 210, isoleucine 224–methionine 244, isoleucine 274–isoleucine 294, alanine 305–cysteine 325, methionine 331–isoleucine 351, phenylalanine 362–tryptophan 382, isoleucine 388–leucine 408, phenylalanine 418–alanine 438, and glutamate 447–leucine 467.

The protein belongs to the monovalent cation:proton antiporter 2 (CPA2) transporter (TC 2.A.37) family. CHX (TC 2.A.37.4) subfamily.

The protein localises to the membrane. In terms of biological role, may operate as a cation/H(+) antiporter. This Arabidopsis thaliana (Mouse-ear cress) protein is Cation/H(+) antiporter 3 (CHX3).